Reading from the N-terminus, the 874-residue chain is Bifunctional uridylyltransferase/uridylyl-removing enzyme (874 aa).

Residues Met-1–Gln-336 are uridylyltransferase. The segment at Leu-337–Thr-695 is uridylyl-removing. An HD domain is found at Val-455–Leu-577. 2 ACT domains span residues Glu-696–Arg-779 and Thr-802–Asp-874.

The protein belongs to the GlnD family. It depends on Mg(2+) as a cofactor.

The enzyme catalyses [protein-PII]-L-tyrosine + UTP = [protein-PII]-uridylyl-L-tyrosine + diphosphate. It carries out the reaction [protein-PII]-uridylyl-L-tyrosine + H2O = [protein-PII]-L-tyrosine + UMP + H(+). Its activity is regulated as follows. Uridylyltransferase (UTase) activity is inhibited by glutamine, while glutamine activates uridylyl-removing (UR) activity. In terms of biological role, modifies, by uridylylation and deuridylylation, the PII regulatory proteins (GlnB and homologs), in response to the nitrogen status of the cell that GlnD senses through the glutamine level. Under low glutamine levels, catalyzes the conversion of the PII proteins and UTP to PII-UMP and PPi, while under higher glutamine levels, GlnD hydrolyzes PII-UMP to PII and UMP (deuridylylation). Thus, controls uridylylation state and activity of the PII proteins, and plays an important role in the regulation of nitrogen assimilation and metabolism. The sequence is that of Bifunctional uridylyltransferase/uridylyl-removing enzyme from Photobacterium profundum (strain SS9).